The sequence spans 67 residues: MPGVFLNEDDYNFDIALRRFKKQVEKAGILSEMKKRQHYEKPSVMRKKKKAAARKRLMKKIRKMNMA.

Belongs to the bacterial ribosomal protein bS21 family.

In Desulfovibrio desulfuricans (strain ATCC 27774 / DSM 6949 / MB), this protein is Small ribosomal subunit protein bS21.